A 204-amino-acid polypeptide reads, in one-letter code: VEL1-related protein AC977.05c (204 aa).

Positions 1 to 17 are cleaved as a signal peptide; that stretch reads MIFKNLISLFFIGLATA.

This sequence belongs to the VEL1 family.

It is found in the cytoplasm. The protein localises to the cytosol. This is VEL1-related protein AC977.05c from Schizosaccharomyces pombe (strain 972 / ATCC 24843) (Fission yeast).